We begin with the raw amino-acid sequence, 208 residues long: N-(5'-phosphoribosyl)anthranilate isomerase (208 aa).

It belongs to the TrpF family.

It catalyses the reaction N-(5-phospho-beta-D-ribosyl)anthranilate = 1-(2-carboxyphenylamino)-1-deoxy-D-ribulose 5-phosphate. It participates in amino-acid biosynthesis; L-tryptophan biosynthesis; L-tryptophan from chorismate: step 3/5. This Methanococcus maripaludis (strain C5 / ATCC BAA-1333) protein is N-(5'-phosphoribosyl)anthranilate isomerase.